The primary structure comprises 512 residues: NAD(P)H-quinone oxidoreductase subunit 2, organellar chromatophore (512 aa).

A run of 14 helical transmembrane segments spans residues 6-26 (LLALPLNAATIVPEGAILLAL), 43-63 (WVPPICYAGLGSALILLASQW), 80-100 (LAIAFRAIIATSTLFSLMISW), 107-127 (GAPMGEYAAILLAATLGAMFL), 133-153 (LVSIFVSLETLSVSSYLLAGY), 168-188 (LLVGSATAAVFLYGASLLYGL), 210-230 (AALALVFVLATVAFKIAAVPF), 242-262 (PTPIVAFLSVGSKTAGFALAL), 276-296 (WKFLFSLLAILSMVLGNIVAL), 304-324 (MLAYSSIGQAGFVMIGLVCGT), 332-352 (ILYLATYLFMNMGAFACVILF), 376-396 (IGLSLCLLSLGGIPPMLGFFG), 411-431 (LLVVTGLITSVVSIYYYISVI), and 464-484 (VALLVCVIVTGIGGIFSNPLF).

The protein belongs to the complex I subunit 2 family. In terms of assembly, NDH-1 can be composed of about 15 different subunits; different subcomplexes with different compositions have been identified which probably have different functions.

The protein resides in the plastid. The protein localises to the organellar chromatophore thylakoid membrane. The catalysed reaction is a plastoquinone + NADH + (n+1) H(+)(in) = a plastoquinol + NAD(+) + n H(+)(out). The enzyme catalyses a plastoquinone + NADPH + (n+1) H(+)(in) = a plastoquinol + NADP(+) + n H(+)(out). NDH-1 shuttles electrons from an unknown electron donor, via FMN and iron-sulfur (Fe-S) centers, to quinones in the respiratory and/or the photosynthetic chain. The immediate electron acceptor for the enzyme in this species is believed to be plastoquinone. Couples the redox reaction to proton translocation, and thus conserves the redox energy in a proton gradient. Cyanobacterial NDH-1 also plays a role in inorganic carbon-concentration. The sequence is that of NAD(P)H-quinone oxidoreductase subunit 2, organellar chromatophore from Paulinella chromatophora.